We begin with the raw amino-acid sequence, 334 residues long: HTH-type transcriptional repressor PurR (334 aa).

Residues 2 to 56 form the HTH lacI-type domain; sequence ATIKDVARMAGVSTTTVSHVINKTRFVAEATQKKVLAAVDDLNYAPSAVARSLKC. Residues 4–23 constitute a DNA-binding region (H-T-H motif); that stretch reads IKDVARMAGVSTTTVSHVIN. A DNA-binding region spans residues 48–56; the sequence is SAVARSLKC. 5 residues coordinate hypoxanthine: Phe73, Lys189, Thr191, Phe220, and Asp274.

Homodimer.

It functions in the pathway purine metabolism; purine nucleotide biosynthesis [regulation]. Is the main repressor of the genes involved in the de novo synthesis of purine nucleotides, regulating purB, purC, purEK, purF, purHD, purL, purMN and guaBA expression. PurR is allosterically activated to bind its cognate DNA by binding the purine corepressors, hypoxanthine or guanine, thereby effecting transcription repression. The protein is HTH-type transcriptional repressor PurR of Photobacterium profundum (strain SS9).